Consider the following 481-residue polypeptide: uncharacterized protein (481 aa).

Belongs to the UbiD family.

This is an uncharacterized protein from Archaeoglobus fulgidus (strain ATCC 49558 / DSM 4304 / JCM 9628 / NBRC 100126 / VC-16).